Consider the following 342-residue polypeptide: Trans-3-hydroxy-L-proline dehydratase (342 aa).

Residue S90 is the Proton acceptor of the active site. Substrate is bound by residues 91–92, D251, and 256–257; these read GS and GT.

This sequence belongs to the proline racemase family.

It catalyses the reaction trans-3-hydroxy-L-proline = 1-pyrroline-2-carboxylate + H2O. Functionally, catalyzes the dehydration of trans-3-hydroxy-L-proline (t3LHyp) to Delta(1)-pyrroline-2-carboxylate (Pyr2C). Displays neither proline racemase activity nor 4-hydroxyproline 2-epimerase activity. In Brucella suis biovar 1 (strain 1330), this protein is Trans-3-hydroxy-L-proline dehydratase.